A 328-amino-acid chain; its full sequence is 4-hydroxythreonine-4-phosphate dehydrogenase (328 aa).

Substrate contacts are provided by histidine 134 and threonine 135. A divalent metal cation is bound by residues histidine 164, histidine 209, and histidine 265. Residues lysine 273, asparagine 282, and arginine 291 each coordinate substrate.

The protein belongs to the PdxA family. Homodimer. The cofactor is Zn(2+). Mg(2+) serves as cofactor. Requires Co(2+) as cofactor.

The protein localises to the cytoplasm. It catalyses the reaction 4-(phosphooxy)-L-threonine + NAD(+) = 3-amino-2-oxopropyl phosphate + CO2 + NADH. It functions in the pathway cofactor biosynthesis; pyridoxine 5'-phosphate biosynthesis; pyridoxine 5'-phosphate from D-erythrose 4-phosphate: step 4/5. Its function is as follows. Catalyzes the NAD(P)-dependent oxidation of 4-(phosphooxy)-L-threonine (HTP) into 2-amino-3-oxo-4-(phosphooxy)butyric acid which spontaneously decarboxylates to form 3-amino-2-oxopropyl phosphate (AHAP). The chain is 4-hydroxythreonine-4-phosphate dehydrogenase from Vibrio vulnificus (strain CMCP6).